We begin with the raw amino-acid sequence, 452 residues long: UDP-N-acetylmuramate--L-alanine ligase (452 aa).

Position 119–125 (119–125 (GAHGKTS)) interacts with ATP.

Belongs to the MurCDEF family.

The protein resides in the cytoplasm. It catalyses the reaction UDP-N-acetyl-alpha-D-muramate + L-alanine + ATP = UDP-N-acetyl-alpha-D-muramoyl-L-alanine + ADP + phosphate + H(+). The protein operates within cell wall biogenesis; peptidoglycan biosynthesis. In terms of biological role, cell wall formation. The chain is UDP-N-acetylmuramate--L-alanine ligase from Streptococcus mutans serotype c (strain ATCC 700610 / UA159).